The sequence spans 2430 residues: Transcription factor HIVEP2 (2430 aa).

Positions 1-127 are disordered; the sequence is MDTGDTALGQ…SLEGPPWLFP (127 aa). Polar residues-rich tracts occupy residues 11–22 and 96–110; these read KATSRSGETDSV and HSLSFPQHSLSQGMT. 2 C2H2-type zinc fingers span residues 189-211 and 217-239; these read YICPYCSRACAKPSVLKKHIRSH and YPCIPCGFSFKTKSNLYKHRKSH. Disordered stretches follow at residues 271–302, 374–418, and 744–995; these read IHSDGEQSTDTDEESSLFAEASDKVSPGPPVP, SEKK…NTNA, and AHGH…SGKH. The span at 381-418 shows a compositional bias: polar residues; sequence SEPSLNLLSPHSKGSTDSGYFSRSESAEQQISPPNTNA. Basic and acidic residues-rich tracts occupy residues 744 to 753 and 775 to 784; these read AHGHSDRLDP and DPDKMTDLGK. The span at 792–804 shows a compositional bias: polar residues; the sequence is SVIQHTNSLSRPN. At Ser811 the chain carries Phosphoserine. Over residues 853–863 the composition is skewed to polar residues; the sequence is SKPTPSQQVPQ. A compositionally biased stretch (basic and acidic residues) spans 884–908; that stretch reads RVTEEPDKPEKEKEAPTKEPEKPVE. The short motif at 929 to 935 is the Nuclear localization signal element; the sequence is PKKKRLR. Phosphoserine is present on residues Ser942, Ser947, Ser1040, Ser1431, and Ser1435. Residues 944–974 are compositionally biased toward low complexity; sequence GESSFESTGTGLSRSPSQESNLSHSSSFSMS. The segment at 1472-1584 is disordered; that stretch reads KKGLSRPQKP…GGQQEEEGKA (113 aa). Composition is skewed to low complexity over residues 1499–1520 and 1560–1569; these read SRSSSFSSLSPSSSQDHPSASG and SDMSMSPQSS. 2 consecutive C2H2-type zinc fingers follow at residues 1783–1805 and 1811–1835; these read YICEECGIRCKKPSMLKKHIRTH and YVCKLCNFAFKTKGNLTKHMKSKAH. Disordered regions lie at residues 1848–1931 and 1986–2117; these read SVDD…SSLP and FQSK…SPRR. The segment covering 1850-1860 has biased composition (acidic residues); sequence DDTETEEAENM. Positions 1861–1871 are enriched in basic and acidic residues; sequence EELHKTSEKHS. Residues 1883–1909 are compositionally biased toward acidic residues; that stretch reads DAEESDGEDGDDNDDDDEDDDDFDDQG. Residues 1991–2001 are compositionally biased toward basic and acidic residues; that stretch reads TDSEPDKDRLD. Residues 2013–2037 show a composition bias toward low complexity; that stretch reads SSEPSSSPRDFSPSSYRSSPGYDSS. 10 repeat units span residues 2037-2040, 2043-2046, 2055-2058, 2067-2070, 2073-2076, 2090-2093, 2096-2099, 2102-2105, 2114-2117, and 2129-2132. Positions 2037 to 2132 are 10 X 4 AA tandem repeats of S-P-[RGMKC]-[RK]; it reads SPCRDNSPKR…TTIRAPSPRR (96 aa). Over residues 2062 to 2085 the composition is skewed to basic and acidic residues; sequence PRRDLSPMRHLSPRKEAALRREMS. Position 2102 is a phosphoserine (Ser2102). Basic and acidic residues predominate over residues 2107-2116; sequence ITARRDLSPR. Disordered stretches follow at residues 2226 to 2252, 2268 to 2309, and 2352 to 2430; these read PALSGLHPPPTLPLPTEGSEEKKGAPG, KQAP…QEEN, and SIRH…NQLH. Low complexity predominate over residues 2271–2289; that stretch reads PQVLQSSGLPSSPSSPRLL. Ser2281 and Ser2285 each carry phosphoserine. Over residues 2291–2301 the composition is skewed to polar residues; it reads KQSTSEDSLNS. Residues 2371-2380 show a composition bias toward basic and acidic residues; it reads PDLHDGEKDT. Residues 2406–2417 show a composition bias toward polar residues; that stretch reads FQSSKELSLSTE. Ser2413 and Ser2415 each carry phosphoserine.

Interacts with TCF4. In terms of tissue distribution, expressed in heart, lung, skeletal muscle and liver. In the brain expressed in cerebral cortex, hippocampus, corpora amygdala and cerebellar cortex.

It localises to the nucleus. In terms of biological role, specifically binds to the DNA sequence 5'-GGGACTTTCC-3' which is found in the enhancer elements of numerous viral promoters such as those of SV40, CMV, or HIV1. In addition, related sequences are found in the enhancer elements of a number of cellular promoters, including those of the class I MHC, interleukin-2 receptor, somatostatin receptor II, and interferon-beta genes. It may act in T-cell activation. This chain is Transcription factor HIVEP2 (Hivep2), found in Mus musculus (Mouse).